A 291-amino-acid chain; its full sequence is Homeobox protein SIX2 (291 aa).

A DNA-binding region (homeobox) is located at residues 124–183 (GEETSYCFKEKSRSVLREWYAHNPYPSPREKRELAEATGLTTTQVSNWFKNRRQRDRAAE). Residues 168–279 (VSNWFKNRRQ…HHHGLQDSIL (112 aa)) are disordered. The segment covering 179–190 (DRAAEAKERENN) has biased composition (basic and acidic residues). Residues 224 to 233 (HSSSSPALLL) are compositionally biased toward low complexity. Residues 249-259 (PPGPSAVPVPV) show a composition bias toward pro residues.

This sequence belongs to the SIX/Sine oculis homeobox family. In terms of assembly, interacts with TCF7L2; in a canonical Wnt signaling independent manner; prevents transcription of differentiation genes in cap mesenchyme. Interacts with OSR1; form a strong repressor complex with TCF7L2, TLE2 and TLE3 to prevent the activation of Wnt/beta-catenin target genes in the cap mesenchyme. Interacts with HOXA11, EYA1 and EYA3. In terms of tissue distribution, strongly expressed in skeletal muscle. Expressed in Wilms' tumor and in the cap mesenchyme of fetal kidney (at protein level).

The protein resides in the nucleus. Transcription factor that plays an important role in the development of several organs, including kidney, skull and stomach. During kidney development, maintains cap mesenchyme multipotent nephron progenitor cells in an undifferentiated state by opposing the inductive signals emanating from the ureteric bud and cooperates with WNT9B to promote renewing progenitor cells proliferation. Acts through its interaction with TCF7L2 and OSR1 in a canonical Wnt signaling independent manner preventing transcription of differentiation genes in cap mesenchyme such as WNT4. Also acts independently of OSR1 to activate expression of many cap mesenchyme genes, including itself, GDNF and OSR1. During craniofacial development plays a role in growth and elongation of the cranial base through regulation of chondrocyte differentiation. During stomach organogenesis, controls pyloric sphincter formation and mucosal growth through regulation of a gene network including NKX2-5, BMPR1B, BMP4, SOX9 and GREM1. During branchial arch development, acts to mediate HOXA2 control over the insulin-like growth factor pathway. May also be involved in limb tendon and ligament development. Plays a role in cell proliferation and migration. The protein is Homeobox protein SIX2 (SIX2) of Homo sapiens (Human).